The primary structure comprises 140 residues: Cytochrome b (140 aa).

The chain crosses the membrane as a helical span at residues 38–58 (FFALHFLLPFVLAALVIMHLI). Heme b-binding residues include His42 and His56. His61 serves as a coordination point for a ubiquinone. Residues 85–105 (FVFKDLVTIFIFFIVLSIFVF) traverse the membrane as a helical segment.

The protein belongs to the cytochrome b family. As to quaternary structure, fungal cytochrome b-c1 complex contains 10 subunits; 3 respiratory subunits, 2 core proteins and 5 low-molecular weight proteins. Cytochrome b-c1 complex is a homodimer. It depends on heme b as a cofactor.

The protein localises to the mitochondrion inner membrane. Functionally, component of the ubiquinol-cytochrome c reductase complex (complex III or cytochrome b-c1 complex) that is part of the mitochondrial respiratory chain. The b-c1 complex mediates electron transfer from ubiquinol to cytochrome c. Contributes to the generation of a proton gradient across the mitochondrial membrane that is then used for ATP synthesis. This Aspergillus terreus protein is Cytochrome b (cob).